The sequence spans 377 residues: GTP 3',8-cyclase (377 aa).

Positions 1–29 are disordered; sequence MTTRLYLSPTPPRNDREGASKSTSASIKH. A Radical SAM core domain is found at 45–271; it reads RFGRIARDLR…FTLSPAKEPR (227 aa). R54 lines the GTP pocket. [4Fe-4S] cluster is bound by residues C61 and C65. Y67 provides a ligand contact to S-adenosyl-L-methionine. A [4Fe-4S] cluster-binding site is contributed by C68. R105 is a binding site for GTP. G109 contacts S-adenosyl-L-methionine. T140 lines the GTP pocket. Residue S164 participates in S-adenosyl-L-methionine binding. A GTP-binding site is contributed by K201. M235 lines the S-adenosyl-L-methionine pocket. [4Fe-4S] cluster-binding residues include C304 and C307. 309-311 contacts GTP; the sequence is RSR. Position 321 (C321) interacts with [4Fe-4S] cluster.

This sequence belongs to the radical SAM superfamily. MoaA family. In terms of assembly, monomer and homodimer. It depends on [4Fe-4S] cluster as a cofactor.

The enzyme catalyses GTP + AH2 + S-adenosyl-L-methionine = (8S)-3',8-cyclo-7,8-dihydroguanosine 5'-triphosphate + 5'-deoxyadenosine + L-methionine + A + H(+). The protein operates within cofactor biosynthesis; molybdopterin biosynthesis. Functionally, catalyzes the cyclization of GTP to (8S)-3',8-cyclo-7,8-dihydroguanosine 5'-triphosphate. This Corynebacterium glutamicum (strain ATCC 13032 / DSM 20300 / JCM 1318 / BCRC 11384 / CCUG 27702 / LMG 3730 / NBRC 12168 / NCIMB 10025 / NRRL B-2784 / 534) protein is GTP 3',8-cyclase.